We begin with the raw amino-acid sequence, 347 residues long: MDASVDRITNLHFEILAKAGGHEIHQKYEAIRKLNLTGDSSKSNISVSARSAILKWADAKQGYIASQLDDRDYGDLIAKAVIFVPMSVITGGKNPKDLIPYGVVAAVLIFVPETLTLLDEIVINLMHDKKPLSSILLTKILRDMKIDVCGSNFDSFYYCPISRYNRHIIKLAGALPQMPTSVRLSVNDLARVAISEVHNQLISDKQMFFKLPTGFSPKVHCLKVLCTTEMEIFQKWVRTFMSDRPNEFIYSDQFNILSRTTYFSSDDPFSFFTLWRGWSTYKEILSQDQASSFLEAIGSGKPLRSSIATFPSMFDEGAIYIRYEWITPKDSANSKKAGSSAPSAPKM.

The protein belongs to the phytoreovirus non-structural protein 10 family.

Suppressor of RNA-mediated gene silencing, also known as post-transcriptional gene silencing (PTGS), a mechanism of plant viral defense that limits the accumulation of viral RNAs. In Catharanthus roseus (Madagascar periwinkle), this protein is Suppressor of RNA-mediated gene silencing.